The following is a 489-amino-acid chain: Serotonin-gated chloride channel mod-1 (489 aa).

Residues 1-20 (MKFIPEITLLLLLFVHSTQA) form the signal peptide. At 21–240 (KGKRRKCPEG…VTFTFKRRYG (220 aa)) the chain is on the extracellular side. Asn44, Asn103, and Asn144 each carry an N-linked (GlcNAc...) asparagine glycan. Serotonin contacts are provided by Tyr180 and Trp226. 3 helical membrane-spanning segments follow: residues 241-261 (FYIIQAYVPTYLTIIVSWVSF), 274-294 (VGISSLLALTFQFGNILKNLP), and 304-324 (VWMLGCISFVFGTMVELAFVC). Residues 325–458 (YISRCQNSVR…ARFHPEAVDK (134 aa)) are Cytoplasmic-facing. A disordered region spans residues 365 to 398 (GSVISHYHPTSNGNGNNNRHDTPQVTGRGSLHRN). Polar residues predominate over residues 372-391 (HPTSNGNGNNNRHDTPQVTG). A helical transmembrane segment spans residues 459-479 (FSIVAFPLAFTMFNLVYWWHY).

The protein belongs to the ligand-gated ion channel (TC 1.A.9) family. Expressed in a subset of muscles, and head and tail neurons, including RME and GABAergic ventral nerve cord neurons. Expressed in AIY, RME, RID, RIF, ASI, DD1-6, and PVN neurons.

It is found in the membrane. Its subcellular location is the cell membrane. Functionally, functions as a 5-hydroxytryptamine (serotonin) receptor. This receptor is a ligand-gated anion-specific ion channel, selective for chloride ions. Relays a long-range endocrine signal from the body cavity neurons to modulate distal adipose triglyceride lipase atgl-1 function, via the nuclear receptor nhr-76. Together with the G-protein coupled serotonin receptor ser-1 involved in male mating behavior. May mediate an inhibitory effect of serotonin on egg laying. Involved in regulating locomotory behavior, perhaps by modulating interneuronal signaling, acting in concert with G-protein coupled serotonin receptor ser-4. In the presence of food, plays a role in initiating and extending dwelling behavior, perhaps acting in AIY, RIF and ASI neurons, in opposition to neuropeptide PDF-mediated signaling. Plays a role in aversive learning upon exposure to pathogens such as Gram-negative bacterium P.aeruginosa strain PA14; perhaps acting in interneurons in response to serotonin released by the serotonergic ADF neurons. This chain is Serotonin-gated chloride channel mod-1, found in Caenorhabditis elegans.